A 269-amino-acid polypeptide reads, in one-letter code: MQFRYLSLVRQQAPLEHCITNIVVTNFSANGLLALGASPFMSAMPQEVTEIQNFAQALLINIGTLNQSDVEAMLIAGKAANRTGVPVVLDPVGAGATLFRRKIVEQFLAEINFAVIRGNAAEIGFLAGTDWQGKGVDAGTGADSENLSRLAQSVAQKYRCVVALSGETDFISDGLKTYQICNGTRMLPKVTGSGCLLGAVIAAFLGVSPPQDYFSACTEACTVYAVAGELAAQGLSNEYGSFAMNFINQLGAIHETRLADKARVLAQHE.

Met-41 is a binding site for substrate. ATP contacts are provided by Arg-117 and Ser-165. Gly-192 contributes to the substrate binding site.

Belongs to the Thz kinase family. Requires Mg(2+) as cofactor.

The catalysed reaction is 5-(2-hydroxyethyl)-4-methylthiazole + ATP = 4-methyl-5-(2-phosphooxyethyl)-thiazole + ADP + H(+). The protein operates within cofactor biosynthesis; thiamine diphosphate biosynthesis; 4-methyl-5-(2-phosphoethyl)-thiazole from 5-(2-hydroxyethyl)-4-methylthiazole: step 1/1. Its function is as follows. Catalyzes the phosphorylation of the hydroxyl group of 4-methyl-5-beta-hydroxyethylthiazole (THZ). The polypeptide is Hydroxyethylthiazole kinase (Actinobacillus succinogenes (strain ATCC 55618 / DSM 22257 / CCUG 43843 / 130Z)).